The following is a 550-amino-acid chain: CCR4-NOT transcription complex subunit 6-like-B (550 aa).

Residues 1 to 148 form a required for interaction with cnot1, cnot3 and cnot7 region; that stretch reads MPKEKYDPPD…LYQEPDGMRK (148 aa). LRR repeat units lie at residues 52 to 73, 75 to 96, 98 to 120, and 121 to 143; these read HLTVLHLSDNNLSRIPPDIAKL, NLVYLDLSSNKLRSLPAELGNV, SLRELLLNNNLLRVLPFELGRLF, and RLQTLGLKGNPLSQDILGLYQEP. The nuclease domain stretch occupies residues 153–550; sequence MLDNLSVHPE…INGVHLPSRR (398 aa). Mg(2+) is bound at residue Glu235. Substrate is bound by residues Glu235, Glu271, His355, and Pro360. Mg(2+) is bound at residue Asp405. The active-site Proton donor/acceptor is the Asp405. Positions 407, 474, and 479 each coordinate substrate.

Belongs to the CCR4/nocturin family. As to quaternary structure, component of the CCR4-NOT complex. It depends on Mg(2+) as a cofactor.

It is found in the cytoplasm. It localises to the nucleus. The catalysed reaction is Exonucleolytic cleavage of poly(A) to 5'-AMP.. Poly(A) nuclease with 3'-5' RNase activity. Catalytic component of the CCR4-NOT complex which is one of the major cellular mRNA deadenylases and is linked to various cellular processes including bulk mRNA degradation, miRNA-mediated repression, translational repression during translational initiation and general transcription regulation. Additional complex functions may be a consequence of its influence on mRNA expression. The protein is CCR4-NOT transcription complex subunit 6-like-B (cnot6l-b) of Xenopus laevis (African clawed frog).